Here is a 263-residue protein sequence, read N- to C-terminus: Zinc import ATP-binding protein ZnuC (263 aa).

In terms of domain architecture, ABC transporter spans 11 to 226 (VELKNINVVF…PTFIHFFGDQ (216 aa)). 43–50 (GPNGGGKS) is a binding site for ATP.

The protein belongs to the ABC transporter superfamily. Zinc importer (TC 3.A.1.15.5) family. In terms of assembly, the complex is composed of two ATP-binding proteins (ZnuC), two transmembrane proteins (ZnuB) and a solute-binding protein (ZnuA).

Its subcellular location is the cell inner membrane. It catalyses the reaction Zn(2+)(out) + ATP(in) + H2O(in) = Zn(2+)(in) + ADP(in) + phosphate(in) + H(+)(in). Functionally, part of the ABC transporter complex ZnuABC involved in zinc import. Responsible for energy coupling to the transport system. The chain is Zinc import ATP-binding protein ZnuC from Pasteurella multocida (strain Pm70).